Reading from the N-terminus, the 138-residue chain is Large ribosomal subunit protein bL17 (138 aa).

This sequence belongs to the bacterial ribosomal protein bL17 family. In terms of assembly, part of the 50S ribosomal subunit. Contacts protein L32.

The sequence is that of Large ribosomal subunit protein bL17 from Halorhodospira halophila (strain DSM 244 / SL1) (Ectothiorhodospira halophila (strain DSM 244 / SL1)).